A 467-amino-acid chain; its full sequence is GTPase Der (467 aa).

EngA-type G domains follow at residues 25–188 and 199–372; these read PVVA…PEAP and RRVA…ASWE. GTP contacts are provided by residues 31-38, 78-82, 140-143, 205-212, 252-256, and 317-320; these read GRPNVGKS, DTGGW, NKAD, DTAGL, and NKWD. In terms of domain architecture, KH-like spans 373-455; it reads TRVPTAQLNA…PIEISVRARK (83 aa).

This sequence belongs to the TRAFAC class TrmE-Era-EngA-EngB-Septin-like GTPase superfamily. EngA (Der) GTPase family. As to quaternary structure, associates with the 50S ribosomal subunit.

Its function is as follows. GTPase that plays an essential role in the late steps of ribosome biogenesis. The sequence is that of GTPase Der from Salinispora tropica (strain ATCC BAA-916 / DSM 44818 / JCM 13857 / NBRC 105044 / CNB-440).